The following is a 206-amino-acid chain: BAG family molecular chaperone regulator 1B (206 aa).

One can recognise a BAG domain in the interval 122–202 (IEAYIDELQQ…QYLSKLDSTK (81 aa)). The residue at position 144 (Ser144) is a Phosphoserine.

As to quaternary structure, binds to the ATPase domain of HSP70/HSC chaperones.

Inhibits the chaperone activity of HSP70/HSC70 by promoting substrate release. In Schizosaccharomyces pombe (strain 972 / ATCC 24843) (Fission yeast), this protein is BAG family molecular chaperone regulator 1B (bag102).